A 57-amino-acid chain; its full sequence is Small hydrophobic protein (57 aa).

At 1 to 8 (MPAIQPPL) the chain is on the virion surface side. Residues 9-29 (YLTFLLLTLLYLIITLYVWTI) form a helical membrane-spanning segment. Over 30 to 57 (LTINHNTAVRYAALYQRSFSRWGFDQSL) the chain is Intravirion.

This sequence belongs to the rubulavirus small hydrophobic protein family. Interacts with host TNFRSF1A, RIPK1 and IRAK1; these interactions interfere with host NF-kappa-B activation at the level of receptor complexes. Interacts with host protein UBQLN4.

The protein resides in the virion membrane. It localises to the host cell membrane. In terms of biological role, plays a role in the inhibition of the host NF-kappa-B pathway. This inhibition occurs at the receptor level, by preventing the signaling of TNFR1 as well as IL-1R and TLR3. In Mumps virus genotype A (strain Jeryl-Lynn) (MuV), this protein is Small hydrophobic protein (SH).